A 152-amino-acid chain; its full sequence is Gamma-glutamylaminecyclotransferase C (152 aa).

A substrate-binding site is contributed by 9 to 12; sequence YGSL. E84 acts as the Proton acceptor in catalysis.

This sequence belongs to the gamma-glutamylcyclotransferase family.

The enzyme catalyses epsilon-(gamma-L-glutamyl)-L-lysine = 5-oxo-L-proline + L-lysine. In terms of biological role, may contribute to degradation of proteins cross-linked by transglutaminases by degrading the cross-link between a lysine and a glutamic acid residue. Catalyzes the formation of 5-oxo-L-proline from L-gamma-glutamyl-L-epsilon-lysine. The protein is Gamma-glutamylaminecyclotransferase C (ggact.3) of Danio rerio (Zebrafish).